The sequence spans 831 residues: Translation initiation factor IF-2 (831 aa).

In terms of domain architecture, tr-type G spans 329-499 (TRAPVVTVMG…LLIAEMQDLK (171 aa)). The G1 stretch occupies residues 338–345 (GHVDHGKT). 338 to 345 (GHVDHGKT) is a binding site for GTP. The interval 363 to 367 (GITQH) is G2. The tract at residues 385 to 388 (DTPG) is G3. GTP contacts are provided by residues 385-389 (DTPGH) and 439-442 (NKID). Positions 439–442 (NKID) are G4. Residues 475 to 477 (SAL) form a G5 region.

It belongs to the TRAFAC class translation factor GTPase superfamily. Classic translation factor GTPase family. IF-2 subfamily.

Its subcellular location is the cytoplasm. In terms of biological role, one of the essential components for the initiation of protein synthesis. Protects formylmethionyl-tRNA from spontaneous hydrolysis and promotes its binding to the 30S ribosomal subunits. Also involved in the hydrolysis of GTP during the formation of the 70S ribosomal complex. This Rickettsia massiliae (strain Mtu5) protein is Translation initiation factor IF-2.